A 156-amino-acid polypeptide reads, in one-letter code: Small ribosomal subunit protein uS7 (156 aa).

The protein belongs to the universal ribosomal protein uS7 family. In terms of assembly, part of the 30S ribosomal subunit. Contacts proteins S9 and S11.

One of the primary rRNA binding proteins, it binds directly to 16S rRNA where it nucleates assembly of the head domain of the 30S subunit. Is located at the subunit interface close to the decoding center, probably blocks exit of the E-site tRNA. In Rubrobacter xylanophilus (strain DSM 9941 / JCM 11954 / NBRC 16129 / PRD-1), this protein is Small ribosomal subunit protein uS7.